Reading from the N-terminus, the 146-residue chain is Globin (146 aa).

Alanine 1 is modified (N-acetylalanine). The 146-residue stretch at 1-146 (ALSAAEAEVV…IIDAMKKAGK (146 aa)) folds into the Globin domain. Histidine 95 provides a ligand contact to heme b.

The protein belongs to the globin family. Monomer.

This is Globin from Dolabella auricularia (Shoulderblade sea cat).